The chain runs to 131 residues: Ribonuclease VapC13 (131 aa).

Positions 2-128 constitute a PINc domain; sequence ILVDSNIPMY…RGFDSYPGIK (127 aa). Residues D5 and D99 each coordinate Mg(2+).

This sequence belongs to the PINc/VapC protein family. Mg(2+) serves as cofactor.

It is found in the secreted. In terms of biological role, toxic component of a type II toxin-antitoxin (TA) system. An RNase. The cognate antitoxin is VapB13. The chain is Ribonuclease VapC13 from Mycobacterium tuberculosis (strain ATCC 25618 / H37Rv).